Consider the following 179-residue polypeptide: Large ribosomal subunit protein uL5 (179 aa).

The protein belongs to the universal ribosomal protein uL5 family. In terms of assembly, part of the 50S ribosomal subunit; part of the 5S rRNA/L5/L18/L25 subcomplex. Contacts the 5S rRNA and the P site tRNA. Forms a bridge to the 30S subunit in the 70S ribosome.

Its function is as follows. This is one of the proteins that bind and probably mediate the attachment of the 5S RNA into the large ribosomal subunit, where it forms part of the central protuberance. In the 70S ribosome it contacts protein S13 of the 30S subunit (bridge B1b), connecting the 2 subunits; this bridge is implicated in subunit movement. Contacts the P site tRNA; the 5S rRNA and some of its associated proteins might help stabilize positioning of ribosome-bound tRNAs. The polypeptide is Large ribosomal subunit protein uL5 (Bordetella petrii (strain ATCC BAA-461 / DSM 12804 / CCUG 43448)).